Reading from the N-terminus, the 186-residue chain is Superoxide dismutase [Cu-Zn] (186 aa).

The first 22 residues, 1-22, serve as a signal peptide directing secretion; that stretch reads MNMKTLLALAVSAVCSVSVAQA. 3 residues coordinate Cu cation: H79, H81, and H104. C86 and C182 are disulfide-bonded. Positions 104, 113, 122, and 125 each coordinate Zn(2+). H160 contacts Cu cation.

Belongs to the Cu-Zn superoxide dismutase family. In terms of assembly, homodimer. It depends on Cu cation as a cofactor. Zn(2+) serves as cofactor.

It localises to the periplasm. The enzyme catalyses 2 superoxide + 2 H(+) = H2O2 + O2. Destroys radicals which are normally produced within the cells and which are toxic to biological systems. The polypeptide is Superoxide dismutase [Cu-Zn] (sodC) (Neisseria meningitidis serogroup A / serotype 4A (strain DSM 15465 / Z2491)).